We begin with the raw amino-acid sequence, 289 residues long: Growth hormone-regulated TBC protein 1 (289 aa).

Residues 41–211 (LVILTKRAIK…RIWDCLFNEG (171 aa)) form the Rab-GAP TBC domain.

In terms of biological role, may act as a GTPase-activating protein for Rab family protein(s). The chain is Growth hormone-regulated TBC protein 1 (Grtp1) from Rattus norvegicus (Rat).